The primary structure comprises 288 residues: Heme oxygenase 1 (288 aa).

The Cytoplasmic portion of the chain corresponds to Met-1 to Ala-265. The heme b site is built by Lys-18, His-25, Tyr-134, and Arg-183. The interval His-223–Asn-260 is disordered. Ser-229 is subject to Phosphoserine. A helical; Anchor for type IV membrane protein membrane pass occupies residues Pro-266 to Met-288.

It belongs to the heme oxygenase family. As to quaternary structure, homodimer and higher order homooligomer. Oligomerization is crucial for its stability and function in the endoplasmic reticulum. Interacts with FLVCR2; this interaction is potentiated in the presence of heme. In terms of processing, a soluble form arises by proteolytic removal of the membrane anchor.

Its subcellular location is the endoplasmic reticulum membrane. It catalyses the reaction heme b + 3 reduced [NADPH--hemoprotein reductase] + 3 O2 = biliverdin IXalpha + CO + Fe(2+) + 3 oxidized [NADPH--hemoprotein reductase] + 3 H2O + H(+). Functionally, catalyzes the oxidative cleavage of heme at the alpha-methene bridge carbon, released as carbon monoxide (CO), to generate biliverdin IXalpha, while releasing the central heme iron chelate as ferrous iron. Affords protection against programmed cell death and this cytoprotective effect relies on its ability to catabolize free heme and prevent it from sensitizing cells to undergo apoptosis. In terms of biological role, catalyzes the oxidative cleavage of heme at the alpha-methene bridge carbon, released as carbon monoxide (CO), to generate biliverdin IXalpha, while releasing the central heme iron chelate as ferrous iron. The polypeptide is Heme oxygenase 1 (HMOX1) (Pongo abelii (Sumatran orangutan)).